Consider the following 353-residue polypeptide: uncharacterized protein (353 aa).

This is an uncharacterized protein from Archaeoglobus fulgidus (strain ATCC 49558 / DSM 4304 / JCM 9628 / NBRC 100126 / VC-16).